Reading from the N-terminus, the 83-residue chain is Large ribosomal subunit protein bL31 (83 aa).

The protein belongs to the bacterial ribosomal protein bL31 family. Type A subfamily. As to quaternary structure, part of the 50S ribosomal subunit.

Its function is as follows. Binds the 23S rRNA. The protein is Large ribosomal subunit protein bL31 of Gloeothece citriformis (strain PCC 7424) (Cyanothece sp. (strain PCC 7424)).